A 494-amino-acid chain; its full sequence is Glutamyl-tRNA(Gln) amidotransferase subunit A (494 aa).

Catalysis depends on charge relay system residues lysine 79 and serine 159. The active-site Acyl-ester intermediate is serine 183.

The protein belongs to the amidase family. GatA subfamily. Heterotrimer of A, B and C subunits.

It catalyses the reaction L-glutamyl-tRNA(Gln) + L-glutamine + ATP + H2O = L-glutaminyl-tRNA(Gln) + L-glutamate + ADP + phosphate + H(+). Its function is as follows. Allows the formation of correctly charged Gln-tRNA(Gln) through the transamidation of misacylated Glu-tRNA(Gln) in organisms which lack glutaminyl-tRNA synthetase. The reaction takes place in the presence of glutamine and ATP through an activated gamma-phospho-Glu-tRNA(Gln). The polypeptide is Glutamyl-tRNA(Gln) amidotransferase subunit A (Bartonella henselae (strain ATCC 49882 / DSM 28221 / CCUG 30454 / Houston 1) (Rochalimaea henselae)).